We begin with the raw amino-acid sequence, 84 residues long: MKGMILFISCLLLIGIVVECKEGYLMDHEGCKLSCFIRPSGYCGSECKIKKGSSGYCAWPACYCYGLPNWVKVWERATNRCGKK.

Residues 1–20 form the signal peptide; the sequence is MKGMILFISCLLLIGIVVEC. The 62-residue stretch at 21–82 folds into the LCN-type CS-alpha/beta domain; the sequence is KEGYLMDHEG…VWERATNRCG (62 aa). 4 disulfide bridges follow: C31-C81, C35-C57, C43-C62, and C47-C64. At C81 the chain carries Cysteine amide.

The protein belongs to the long (4 C-C) scorpion toxin superfamily. Sodium channel inhibitor family. Beta subfamily. Expressed by the venom gland.

Its subcellular location is the secreted. Functionally, beta toxins bind voltage-independently at site-4 of sodium channels (Nav) and shift the voltage of activation toward more negative potentials thereby affecting sodium channel activation and promoting spontaneous and repetitive firing. The toxin induces a leftward shift, on all channels tested (including Blattella germanica and Varroa destructor Nav1), displacing a change in voltage dependence activation to more hyperpolarized potentials. In addition, the toxin mostly inhibits peak current of hNav1.4/SCN4A (53% inhibition of peak current at 100 nM) and hNav1.5/SCN5A (71% inhibition). This chain is Beta-toxin Tf1a, found in Tityus fasciolatus (Central Brazilian scorpion).